The following is a 505-amino-acid chain: Bifunctional NAD(P)H-hydrate repair enzyme Nnr (505 aa).

Positions 1-219 (MKPTFPAIVT…SVVIETALAS (219 aa)) are NAD(P)H-hydrate epimerase. Residues 14 to 214 (MQAIEGAMFN…PFDIPSVVIE (201 aa)) form the YjeF N-terminal domain. Residues 63–67 (HNGGD) form an NADPHX 1; for epimerase activity region. Positions 64 and 124 each coordinate K(+). Residues 128–134 (GFGLERE) are NADPHX 1; for epimerase activity. Aspartate 157 provides a ligand contact to (6S)-NADPHX. Residue serine 160 coordinates K(+). Residues 226-500 (LDDSCWQALP…AHLLPTLRRA (275 aa)) form the YjeF C-terminal domain. The segment at 227–505 (DDSCWQALPL…TLRRALAARV (279 aa)) is ADP-dependent (S)-NAD(P)H-hydrate dehydratase. Residue glycine 330 participates in (6S)-NADPHX binding. The tract at residues 376 to 382 (HYGEFRR) is NADPHX 2; for dehydratase activity. Residues 412 to 416 (KGART) and 432 to 441 (TPALARGGSG) each bind ADP. A (6S)-NADPHX-binding site is contributed by aspartate 442.

It in the N-terminal section; belongs to the NnrE/AIBP family. The protein in the C-terminal section; belongs to the NnrD/CARKD family. The cofactor is K(+).

It carries out the reaction (6S)-NADHX + ADP = AMP + phosphate + NADH + H(+). The enzyme catalyses (6S)-NADPHX + ADP = AMP + phosphate + NADPH + H(+). The catalysed reaction is (6R)-NADHX = (6S)-NADHX. It catalyses the reaction (6R)-NADPHX = (6S)-NADPHX. Its function is as follows. Bifunctional enzyme that catalyzes the epimerization of the S- and R-forms of NAD(P)HX and the dehydration of the S-form of NAD(P)HX at the expense of ADP, which is converted to AMP. This allows the repair of both epimers of NAD(P)HX, a damaged form of NAD(P)H that is a result of enzymatic or heat-dependent hydration. The polypeptide is Bifunctional NAD(P)H-hydrate repair enzyme Nnr (nnr) (Thermosynechococcus vestitus (strain NIES-2133 / IAM M-273 / BP-1)).